The following is a 458-amino-acid chain: MALWGGRFTQQADQQFKYFNDSLRFDYRLALQDIDGSIGWAKAIHSVGIINQAELVELIAALKQLRAEVAPNLAIVLQEDAEDIHSWVELQLIKKVGDLGKKLHTGRSRNDQVAVDMKLWCKAQVLSLQESIRALQEKLVETAEANQLSVMPGYTHLQRAQPITFAHWCMAYYEMLERDYSRLTDAYKRMNTCPLGSGALAGTAYAIDRDLLAQDLGFETATRNSLDSVSDRDHVLELLAAASISMMHLSRFAEDLIIFNSGESHFVELSDRVTSGSSLMPQKKNPDACELVRGKTGRVFGALSGLLATLKGLPLAYNKDMQEDKEGIFDAIETWQACVNISALVLEDIKVDTERTKEAAQQGYANATELADYLVAKGIPFREAHHIVGEAVVYAISQKKALEELNLDKFKQFHSVINDDVYPILSLDSCLTKRCAKGGVNLERVAEAIAAAKQNLNQ.

The protein belongs to the lyase 1 family. Argininosuccinate lyase subfamily.

It localises to the cytoplasm. The catalysed reaction is 2-(N(omega)-L-arginino)succinate = fumarate + L-arginine. Its pathway is amino-acid biosynthesis; L-arginine biosynthesis; L-arginine from L-ornithine and carbamoyl phosphate: step 3/3. This Glaesserella parasuis serovar 5 (strain SH0165) (Haemophilus parasuis) protein is Argininosuccinate lyase.